A 447-amino-acid polypeptide reads, in one-letter code: Chromosomal replication initiator protein DnaA (447 aa).

The interval methionine 1–lysine 66 is domain I, interacts with DnaA modulators. The tract at residues lysine 66–serine 102 is domain II. Residues asparagine 103 to serine 319 are domain III, AAA+ region. ATP-binding residues include glycine 146, glycine 148, lysine 149, and threonine 150. The interval serine 320–glycine 447 is domain IV, binds dsDNA.

Belongs to the DnaA family. Oligomerizes as a right-handed, spiral filament on DNA at oriC.

The protein resides in the cytoplasm. Plays an essential role in the initiation and regulation of chromosomal replication. ATP-DnaA binds to the origin of replication (oriC) to initiate formation of the DNA replication initiation complex once per cell cycle. Binds the DnaA box (a 9 base pair repeat at the origin) and separates the double-stranded (ds)DNA. Forms a right-handed helical filament on oriC DNA; dsDNA binds to the exterior of the filament while single-stranded (ss)DNA is stabiized in the filament's interior. The ATP-DnaA-oriC complex binds and stabilizes one strand of the AT-rich DNA unwinding element (DUE), permitting loading of DNA polymerase. After initiation quickly degrades to an ADP-DnaA complex that is not apt for DNA replication. Binds acidic phospholipids. This chain is Chromosomal replication initiator protein DnaA, found in Kosmotoga olearia (strain ATCC BAA-1733 / DSM 21960 / TBF 19.5.1).